We begin with the raw amino-acid sequence, 612 residues long: Peroxisomal carnitine O-octanoyltransferase (612 aa).

Residue methionine 1 is modified to N-acetylmethionine. N6-succinyllysine occurs at positions 40 and 57. Histidine 327 (proton acceptor) is an active-site residue. CoA-binding positions include lysine 406 and 410-417; that span reads KEKQLHPD. Lysine 406 is subject to N6-acetyllysine; alternate. Lysine 406 bears the N6-succinyllysine; alternate mark. The (R)-carnitine site is built by tyrosine 439, threonine 441, and threonine 452. Residues 610–612 carry the Microbody targeting signal motif; sequence PHL.

The protein belongs to the carnitine/choline acetyltransferase family. Monomer.

It localises to the peroxisome. The catalysed reaction is octanoyl-CoA + (R)-carnitine = O-octanoyl-(R)-carnitine + CoA. The enzyme catalyses 4,8-dimethylnonanoyl-CoA + (R)-carnitine = O-4,8-dimethylnonanoyl-(R)-carnitine + CoA. It functions in the pathway lipid metabolism; fatty acid beta-oxidation. In terms of biological role, beta-oxidation of fatty acids. The highest activity concerns the C6 to C10 chain length substrate. The polypeptide is Peroxisomal carnitine O-octanoyltransferase (CROT) (Bos taurus (Bovine)).